The sequence spans 286 residues: Transcription initiation factor IIA large subunit (286 aa).

Disordered stretches follow at residues 120–145 (NTVE…ADVT), 167–195 (TVEN…KEKE), and 208–236 (KRSA…EGEE). Positions 175–195 (SEKKDDEEKEEDVEKTRKEKE) are enriched in basic and acidic residues. A compositionally biased stretch (acidic residues) spans 214–236 (DTDEVGSELDDSDDDYLISEGEE).

The protein belongs to the TFIIA subunit 1 family. In terms of assembly, TFIIA is a heterodimer composed of the large TOA1 and a small TOA2 subunits. Interacts with KAP122.

The protein localises to the cytoplasm. It localises to the nucleus. Functionally, TFIIA is a component of the transcription machinery of RNA polymerase II and implicated in the regulation of basal transcription. Interacts with TBP (the TATA-binding protein). This Saccharomyces cerevisiae (strain ATCC 204508 / S288c) (Baker's yeast) protein is Transcription initiation factor IIA large subunit (TOA1).